The primary structure comprises 350 residues: Histidinol-phosphate aminotransferase (350 aa).

Lys-209 carries the post-translational modification N6-(pyridoxal phosphate)lysine.

The protein belongs to the class-II pyridoxal-phosphate-dependent aminotransferase family. Histidinol-phosphate aminotransferase subfamily. In terms of assembly, homodimer. Pyridoxal 5'-phosphate serves as cofactor.

It carries out the reaction L-histidinol phosphate + 2-oxoglutarate = 3-(imidazol-4-yl)-2-oxopropyl phosphate + L-glutamate. It functions in the pathway amino-acid biosynthesis; L-histidine biosynthesis; L-histidine from 5-phospho-alpha-D-ribose 1-diphosphate: step 7/9. The chain is Histidinol-phosphate aminotransferase from Geobacter sp. (strain M21).